The following is a 268-amino-acid chain: Tryptophan synthase alpha chain (268 aa).

Catalysis depends on proton acceptor residues Glu-49 and Asp-60.

The protein belongs to the TrpA family. In terms of assembly, tetramer of two alpha and two beta chains.

It carries out the reaction (1S,2R)-1-C-(indol-3-yl)glycerol 3-phosphate + L-serine = D-glyceraldehyde 3-phosphate + L-tryptophan + H2O. The protein operates within amino-acid biosynthesis; L-tryptophan biosynthesis; L-tryptophan from chorismate: step 5/5. The alpha subunit is responsible for the aldol cleavage of indoleglycerol phosphate to indole and glyceraldehyde 3-phosphate. The protein is Tryptophan synthase alpha chain of Escherichia fergusonii (strain ATCC 35469 / DSM 13698 / CCUG 18766 / IAM 14443 / JCM 21226 / LMG 7866 / NBRC 102419 / NCTC 12128 / CDC 0568-73).